A 363-amino-acid polypeptide reads, in one-letter code: Probable aminomethyltransferase (363 aa).

The protein belongs to the GcvT family. In terms of assembly, the glycine cleavage system is composed of four proteins: P, T, L and H.

The catalysed reaction is N(6)-[(R)-S(8)-aminomethyldihydrolipoyl]-L-lysyl-[protein] + (6S)-5,6,7,8-tetrahydrofolate = N(6)-[(R)-dihydrolipoyl]-L-lysyl-[protein] + (6R)-5,10-methylene-5,6,7,8-tetrahydrofolate + NH4(+). Its function is as follows. The glycine cleavage system catalyzes the degradation of glycine. This is Probable aminomethyltransferase from Halobacterium salinarum (strain ATCC 29341 / DSM 671 / R1).